The sequence spans 472 residues: Cannabinoid receptor 1 (472 aa).

Residues 1–116 are Extracellular-facing; the sequence is MKSILDGLAD…CFMVLNPSQQ (116 aa). The tract at residues 2-23 is required for mitochondrial localization; the sequence is KSILDGLADTTFRTITTDLLYV. Asparagine 77 and asparagine 83 each carry an N-linked (GlcNAc...) asparagine glycan. Residues 117 to 142 form a helical membrane-spanning segment; it reads LAIAVLSLTLGTFTVLENLLVLCVIL. Residues 143–154 are Cytoplasmic-facing; that stretch reads HSRSLRCRPSYH. A helical membrane pass occupies residues 155-175; the sequence is FIGSLAVADLLGSVIFVYSFI. Over 176 to 187 the chain is Extracellular; the sequence is DFHVFHRKDSRN. A helical membrane pass occupies residues 188 to 212; that stretch reads VFLFKLGGVTASFTASVGSLFLTAI. Residues 213-232 are Cytoplasmic-facing; sequence DRYISIHRPLAYKRIVTRPK. The helical transmembrane segment at 233–255 threads the bilayer; that stretch reads AVVAFCLMWTIAIVIAVLPLLGW. The Extracellular segment spans residues 256–273; sequence NCEKLQSVCSDIFPHIDE. A helical membrane pass occupies residues 274–299; that stretch reads TYLMFWIGVTSVLLLFIVYAYMYILW. The Cytoplasmic portion of the chain corresponds to 300 to 344; it reads KAHSHAVRMIQRGTQKSIIIHTSEDGKVQVTRPDQARMDIRLAKT. The chain crosses the membrane as a helical span at residues 345–365; sequence LVLILVVLIICWGPLLAIMVY. Topologically, residues 366–377 are extracellular; it reads DVFGKMNKLIKT. The chain crosses the membrane as a helical span at residues 378 to 399; the sequence is VFAFCSMLCLLNSTVNPIIYAL. Residues 400 to 472 lie on the Cytoplasmic side of the membrane; it reads RSKDLRHAFR…VSTDTSAEAL (73 aa). Cysteine 415 is lipidated: S-palmitoyl cysteine. Phosphoserine occurs at positions 425 and 429.

Belongs to the G-protein coupled receptor 1 family. In terms of assembly, interacts (via C-terminus) with CNRIP1; this interaction attenuates constitutive, but not agonist-dependent, inhibition of voltage-gated Ca(2+) channels in neurons. Associates with G protein alpha subunits, including G(i) alpha-1/GNAI1, G(i) alpha-3/GNAI3 and G(o)-alpha/GNAO1; palmitoylation is important for interaction with GNAI3 and GNAO1. Palmitoylation at Cys-415 is important for recruitment at plasma membrane and lipid rafts and association with G protein alpha subunits. In terms of tissue distribution, widely expressed, with highest levels in fetal and adult brain. Expression levels of isoform 2 and isoform 3 are much lower than those of isoform 1.

The protein resides in the cell membrane. The protein localises to the membrane raft. It is found in the mitochondrion outer membrane. It localises to the cell projection. Its subcellular location is the axon. The protein resides in the presynapse. With respect to regulation, hemopressin, a peptide derived from hemoglobin subunit alpha (HBA1 and/or HBA2), acts as an antagonist peptide: hemopressin-binding efficiently blocks cannabinoid receptor CNR1 and subsequent signaling. In terms of biological role, G-protein coupled receptor for endogenous cannabinoids (eCBs), including N-arachidonoylethanolamide (also called anandamide or AEA) and 2-arachidonoylglycerol (2-AG), as well as phytocannabinoids, such as delta(9)-tetrahydrocannabinol (THC). Mediates many cannabinoid-induced effects, acting, among others, on food intake, memory loss, gastrointestinal motility, catalepsy, ambulatory activity, anxiety, chronic pain. Signaling typically involves reduction in cyclic AMP. In the hypothalamus, may have a dual effect on mitochondrial respiration depending upon the agonist dose and possibly upon the cell type. Increases respiration at low doses, while decreases respiration at high doses. At high doses, CNR1 signal transduction involves G-protein alpha-i protein activation and subsequent inhibition of mitochondrial soluble adenylate cyclase, decrease in cyclic AMP concentration, inhibition of protein kinase A (PKA)-dependent phosphorylation of specific subunits of the mitochondrial electron transport system, including NDUFS2. In the hypothalamus, inhibits leptin-induced reactive oxygen species (ROS) formation and mediates cannabinoid-induced increase in SREBF1 and FASN gene expression. In response to cannabinoids, drives the release of orexigenic beta-endorphin, but not that of melanocyte-stimulating hormone alpha/alpha-MSH, from hypothalamic POMC neurons, hence promoting food intake. In the hippocampus, regulates cellular respiration and energy production in response to cannabinoids. Involved in cannabinoid-dependent depolarization-induced suppression of inhibition (DSI), a process in which depolarization of CA1 postsynaptic pyramidal neurons mobilizes eCBs, which retrogradely activate presynaptic CB1 receptors, transiently decreasing GABAergic inhibitory neurotransmission. Also reduces excitatory synaptic transmission. In superior cervical ganglions and cerebral vascular smooth muscle cells, inhibits voltage-gated Ca(2+) channels in a constitutive, as well as agonist-dependent manner. In cerebral vascular smooth muscle cells, cannabinoid-induced inhibition of voltage-gated Ca(2+) channels leads to vasodilation and decreased vascular tone. Induces leptin production in adipocytes and reduces LRP2-mediated leptin clearance in the kidney, hence participating in hyperleptinemia. In adipose tissue, CNR1 signaling leads to increased expression of SREBF1, ACACA and FASN genes. In the liver, activation by endocannabinoids leads to increased de novo lipogenesis and reduced fatty acid catabolism, associated with increased expression of SREBF1/SREBP-1, GCK, ACACA, ACACB and FASN genes. May also affect de novo cholesterol synthesis and HDL-cholesteryl ether uptake. Peripherally modulates energy metabolism. In high carbohydrate diet-induced obesity, may decrease the expression of mitochondrial dihydrolipoyl dehydrogenase/DLD in striated muscles, as well as that of selected glucose/ pyruvate metabolic enzymes, hence affecting energy expenditure through mitochondrial metabolism. In response to cannabinoid anandamide, elicits a pro-inflammatory response in macrophages, which involves NLRP3 inflammasome activation and IL1B and IL18 secretion. In macrophages infiltrating pancreatic islets, this process may participate in the progression of type-2 diabetes and associated loss of pancreatic beta-cells. Functionally, binds both 2-arachidonoylglycerol (2-AG) and anandamide. Only binds 2-arachidonoylglycerol (2-AG) with high affinity. Contrary to its effect on isoform 1, 2-AG behaves as an inverse agonist on isoform 2 in assays measuring GTP binding to membranes. Its function is as follows. Only binds 2-arachidonoylglycerol (2-AG) with high affinity. Contrary to its effect on isoform 1, 2-AG behaves as an inverse agonist on isoform 3 in assays measuring GTP binding to membranes. This Homo sapiens (Human) protein is Cannabinoid receptor 1 (CNR1).